The chain runs to 104 residues: L-rhamnose mutarotase (104 aa).

Position 18 (Tyr18) interacts with substrate. The Proton donor role is filled by His22. Residues Tyr41 and 76–77 (WW) each bind substrate.

The protein belongs to the rhamnose mutarotase family. Homodimer.

Its subcellular location is the cytoplasm. It catalyses the reaction alpha-L-rhamnose = beta-L-rhamnose. It participates in carbohydrate metabolism; L-rhamnose metabolism. Functionally, involved in the anomeric conversion of L-rhamnose. The chain is L-rhamnose mutarotase from Enterobacter sp. (strain 638).